A 284-amino-acid polypeptide reads, in one-letter code: Bifunctional protein FolD (284 aa).

Residues 165–167 (GRS) and serine 190 each bind NADP(+).

Belongs to the tetrahydrofolate dehydrogenase/cyclohydrolase family. In terms of assembly, homodimer.

It catalyses the reaction (6R)-5,10-methylene-5,6,7,8-tetrahydrofolate + NADP(+) = (6R)-5,10-methenyltetrahydrofolate + NADPH. The enzyme catalyses (6R)-5,10-methenyltetrahydrofolate + H2O = (6R)-10-formyltetrahydrofolate + H(+). Its pathway is one-carbon metabolism; tetrahydrofolate interconversion. Functionally, catalyzes the oxidation of 5,10-methylenetetrahydrofolate to 5,10-methenyltetrahydrofolate and then the hydrolysis of 5,10-methenyltetrahydrofolate to 10-formyltetrahydrofolate. In Streptococcus equi subsp. zooepidemicus (strain H70), this protein is Bifunctional protein FolD.